The primary structure comprises 236 residues: Transmembrane protein 70 homolog, mitochondrial (236 aa).

The N-terminal 64 residues, methionine 1–glutamate 64, are a transit peptide targeting the mitochondrion. The next 2 helical transmembrane spans lie at methionine 83–leucine 103 and valine 116–isoleucine 136.

This sequence belongs to the TMEM70 family. As to quaternary structure, associates with mitochondrial complex I assembly intermediates during its biogenesis.

The protein localises to the mitochondrion membrane. Scaffold protein that participates in the c-ring assembly of mitochondrial ATP synthase (F(1)F(0) ATP synthase or complex V). Also binds the mitochondrial proton-transporting ATP synthase complex I and may play a role in the stability of its membrane-bound subassemblies. This chain is Transmembrane protein 70 homolog, mitochondrial, found in Drosophila melanogaster (Fruit fly).